A 699-amino-acid polypeptide reads, in one-letter code: Ribosomal RNA large subunit methyltransferase K/L (699 aa).

Residues 44–155 form the THUMP domain; the sequence is DAYKLCLWSR…RDNVILGIDL (112 aa).

This sequence belongs to the methyltransferase superfamily. RlmKL family.

The protein resides in the cytoplasm. It catalyses the reaction guanosine(2445) in 23S rRNA + S-adenosyl-L-methionine = N(2)-methylguanosine(2445) in 23S rRNA + S-adenosyl-L-homocysteine + H(+). It carries out the reaction guanosine(2069) in 23S rRNA + S-adenosyl-L-methionine = N(2)-methylguanosine(2069) in 23S rRNA + S-adenosyl-L-homocysteine + H(+). Functionally, specifically methylates the guanine in position 2445 (m2G2445) and the guanine in position 2069 (m7G2069) of 23S rRNA. The polypeptide is Ribosomal RNA large subunit methyltransferase K/L (Alteromonas mediterranea (strain DSM 17117 / CIP 110805 / LMG 28347 / Deep ecotype)).